The following is a 206-amino-acid chain: Orotate phosphoribosyltransferase (206 aa).

Residues Lys26, Tyr72–Lys73, Arg99, Lys100, Lys103, His105, and Asp124–Ser132 each bind 5-phospho-alpha-D-ribose 1-diphosphate. Residues Thr128 and Arg157 each coordinate orotate.

Belongs to the purine/pyrimidine phosphoribosyltransferase family. PyrE subfamily. In terms of assembly, homodimer. Requires Mg(2+) as cofactor.

It catalyses the reaction orotidine 5'-phosphate + diphosphate = orotate + 5-phospho-alpha-D-ribose 1-diphosphate. It functions in the pathway pyrimidine metabolism; UMP biosynthesis via de novo pathway; UMP from orotate: step 1/2. Functionally, catalyzes the transfer of a ribosyl phosphate group from 5-phosphoribose 1-diphosphate to orotate, leading to the formation of orotidine monophosphate (OMP). This Buchnera aphidicola subsp. Baizongia pistaciae (strain Bp) protein is Orotate phosphoribosyltransferase.